Here is a 74-residue protein sequence, read N- to C-terminus: Ubiquitin-like protein FUBI (74 aa).

The protein belongs to the ubiquitin family.

In terms of biological role, confers arsenite resistance. The chain is Ubiquitin-like protein FUBI (FAU) from Cricetulus griseus (Chinese hamster).